A 510-amino-acid polypeptide reads, in one-letter code: JmjC domain-containing histone demethylation protein 1 (510 aa).

The PHD-type zinc finger occupies 2–53 (PNRCDFCTSSSTKDKQQWTQCDGCDRWVHDVCVSITDPVSYAKYHCPTCTKT). The region spanning 216-365 (TLVRELDLVD…TQIDIAGIEV (150 aa)) is the JmjC domain. A substrate-binding site is contributed by T255. Positions 258 and 260 each coordinate Fe cation. Position 275 (K275) interacts with substrate. Position 333 (H333) interacts with Fe cation. The segment at 475–510 (KGESKEKHKIESQLPEEKILQGSKLESKEEVQTENF) is disordered. Residues 477–510 (ESKEKHKIESQLPEEKILQGSKLESKEEVQTENF) show a composition bias toward basic and acidic residues.

The protein belongs to the JHDM1 histone demethylase family. Requires Fe(2+) as cofactor.

The protein localises to the nucleus. It carries out the reaction N(6),N(6)-dimethyl-L-lysyl(36)-[histone H3] + 2 2-oxoglutarate + 2 O2 = L-lysyl(36)-[histone H3] + 2 formaldehyde + 2 succinate + 2 CO2. Functionally, histone demethylase that specifically demethylates 'Lys-36' of histone H3, thereby playing a central role in histone code. This Yarrowia lipolytica (strain CLIB 122 / E 150) (Yeast) protein is JmjC domain-containing histone demethylation protein 1 (JHD1).